A 318-amino-acid chain; its full sequence is Ribosomal RNA small subunit methyltransferase H (318 aa).

S-adenosyl-L-methionine contacts are provided by residues 37–39, Asp-56, Tyr-83, Asp-104, and Gln-111; that span reads GGH. Positions 293 to 318 are disordered; sequence EEEIAENRRAAPARLRGAQRIREDAE.

This sequence belongs to the methyltransferase superfamily. RsmH family.

The protein localises to the cytoplasm. It catalyses the reaction cytidine(1402) in 16S rRNA + S-adenosyl-L-methionine = N(4)-methylcytidine(1402) in 16S rRNA + S-adenosyl-L-homocysteine + H(+). Specifically methylates the N4 position of cytidine in position 1402 (C1402) of 16S rRNA. This Streptomyces avermitilis (strain ATCC 31267 / DSM 46492 / JCM 5070 / NBRC 14893 / NCIMB 12804 / NRRL 8165 / MA-4680) protein is Ribosomal RNA small subunit methyltransferase H.